Consider the following 666-residue polypeptide: MAVEEIASRKDISLRDMQISAILKMLFLNKDLNNNDNITTITDDIFNQQEIIWKVLILDIKSTATISSVLRVNDLLKAGITVHSLIKQDRSPLPDVPAIYFVSPTKENIDIIVNDLKSDKYSEFYINFTSSLPRNLLEDLAQQVSITGKSDKIKQVYDQYLDFIVTEPELFSLEISNAYLTLNDPKTTEEEITGLCANIADGLFNTVLTINSIPIIRAAKGGPAEIIAEKLGTKLRDFVINTNSSSTSTLQGNDSLERGVLIILDRNIDFASMFSHSWIYQCMVFDIFKLSRNTVTIPLESKENGTDNTTAKPLATKKYDIEPNDFFWMENSHLPFPEAAENVEAALNTYKEEAAEITRKTGVTNISDLDPNSNNDTVQIQEVVKKLPELTAKKNTIDTHMNIFAALLSQLESKSLDTFFEVEQDPGSTKTRSRFLDILKDGKTNNLEDKLRSFIVLYLTSTTGLPKDFVQNVENYFKENDYDINALKYVYKLREFMQLSNMSLQNKSLEDGSDSAFKPSNLTLSGIYGLTEGKLQGGVGSLISGIKKLLPEKKTIPITNVVDAIMDPLNSSQKNLETTDSYLYIDPKITRGSHTRKPKRQSYNKSLVFVVGGGNYLEYQNLQEWAHSQLHNPKKVMYGSTAITTPAEFLNEISRLGASNSSNNDA.

Repeat copies occupy residues lysine 106 to glutamine 142, lysine 220 to glutamate 257, leucine 436 to glutamate 474, and lysine 478 to aspartate 514. The interval lysine 106–aspartate 514 is 4 X approximate repeats.

It belongs to the STXBP/unc-18/SEC1 family. Interacts with SED5.

It localises to the cytoplasm. The protein localises to the membrane. In terms of biological role, able to suppress the functional loss of YPT1. SLY1 is essential for cell viability. May interact indirectly, or directly with YPT1. This is Protein SLY1 (SLY1) from Saccharomyces cerevisiae (strain ATCC 204508 / S288c) (Baker's yeast).